The following is a 498-amino-acid chain: Lysine--tRNA ligase (498 aa).

Mg(2+)-binding residues include E409 and E416.

The protein belongs to the class-II aminoacyl-tRNA synthetase family. In terms of assembly, homodimer. Mg(2+) is required as a cofactor.

It is found in the cytoplasm. The catalysed reaction is tRNA(Lys) + L-lysine + ATP = L-lysyl-tRNA(Lys) + AMP + diphosphate. In Teredinibacter turnerae (strain ATCC 39867 / T7901), this protein is Lysine--tRNA ligase.